We begin with the raw amino-acid sequence, 447 residues long: Dimethylsulfoniopropionate lyase DddP (447 aa).

Positions 1–26 (MNRHFNATRKIDPSRGATLGDGSPND) are disordered. D295, D297, D307, H371, E406, and E421 together coordinate a divalent metal cation.

This sequence belongs to the peptidase M24B family. In terms of assembly, homodimer. Requires a divalent metal cation as cofactor.

The enzyme catalyses S,S-dimethyl-beta-propiothetin = acrylate + dimethyl sulfide + H(+). Able to cleave dimethylsulfoniopropionate (DMSP), releasing dimethyl sulfide (DMS). DMS is the principal form by which sulfur is transported from oceans to the atmosphere. The real activity of the protein is however subject to debate and it is unclear whether it constitutes a real dimethylsulfoniopropionate lyase in vivo: the low activity with DMSP as substrate suggests that DMSP is not its native substrate. The polypeptide is Dimethylsulfoniopropionate lyase DddP (Roseobacter denitrificans (strain ATCC 33942 / OCh 114) (Erythrobacter sp. (strain OCh 114))).